The sequence spans 372 residues: Inner membrane protein YbiR (372 aa).

At 1–13 (MSLPFLRTLQGDR) the chain is on the periplasmic side. The next 2 helical transmembrane spans lie at 14-34 (FFQL…FAPK) and 35-55 (SWPA…MLLT). Residues 56–85 (KGVELSGYFDVLGRKMVRRFATERRLAMFM) are Periplasmic-facing. Residues 86–106 (VLAAALLSTFLTNDVALFIVV) traverse the membrane as a helical segment. Over 107-122 (PLTITLKRLCEIPVNR) the chain is Cytoplasmic. A helical transmembrane segment spans residues 123–143 (LIIFEALAVNAGSLLTPIGNP). Topologically, residues 144 to 155 (QNILIWGRSGLS) are periplasmic. The chain crosses the membrane as a helical span at residues 156-176 (FAGFIAQMAPLAGAMMLTLLL). Residues 177 to 208 (LCWCCFPGKAMQYHTGVQTPEWKPRLVWSCLG) lie on the Cytoplasmic side of the membrane. The helical transmembrane segment at 209-229 (LYIVFLTALEFKQELWGLVIV) threads the bilayer. Topologically, residues 230–247 (AAGFALLARRVVLSVDWT) are periplasmic. The helical transmembrane segment at 248–268 (LLLVFMAMFIDVHLLTQLPAL) threads the bilayer. Topologically, residues 269–283 (QGVLGNVSHLSEPGL) are cytoplasmic. A helical transmembrane segment spans residues 284–304 (WLTAIGLSQVISNVPSTILLL). At 305 to 309 (NYVPP) the chain is on the periplasmic side. Residues 310-330 (SLLLVWAVNVGGFGLLPGSLA) traverse the membrane as a helical segment. The Cytoplasmic portion of the chain corresponds to 331 to 348 (NLIALRMANDRRIWWRFH). The helical transmembrane segment at 349–369 (LYSIPMLLWAALVGYVLLVIL) threads the bilayer. Residues 370-372 (PAN) are Periplasmic-facing.

The protein belongs to the CitM (TC 2.A.11) transporter family.

It is found in the cell inner membrane. This chain is Inner membrane protein YbiR (ybiR), found in Escherichia coli (strain K12).